A 278-amino-acid polypeptide reads, in one-letter code: Dermonecrotic toxin LbSicTox-betaIA1a (278 aa).

Residue His12 is part of the active site. Glu32 and Asp34 together coordinate Mg(2+). Catalysis depends on His48, which acts as the Nucleophile. Cystine bridges form between Cys52-Cys58 and Cys54-Cys197. Asp92 is a Mg(2+) binding site. The N-linked (GlcNAc...) asparagine glycan is linked to Asn258.

Belongs to the arthropod phospholipase D family. Class II subfamily. Class IIb sub-subfamily. In terms of tissue distribution, expressed by the venom gland.

It localises to the secreted. The enzyme catalyses an N-(acyl)-sphingosylphosphoethanolamine = an N-(acyl)-sphingosyl-1,3-cyclic phosphate + ethanolamine. It carries out the reaction a 1-acyl-sn-glycero-3-phosphocholine = a 1-acyl-sn-glycero-2,3-cyclic phosphate + choline. It catalyses the reaction a 1-acyl-sn-glycero-3-phosphoethanolamine = a 1-acyl-sn-glycero-2,3-cyclic phosphate + ethanolamine. This toxin does not show activity on sphingomyelin (SM) and does not show dermonecrotic activities. This toxin is a member of dermonecrotic toxins that cleave the phosphodiester linkage between the phosphate and headgroup of certain phospholipids (sphingolipid and lysolipid substrates), forming an alcohol (often choline) and a cyclic phosphate. It may act on ceramide phosphoethanolamine (CPE), lysophosphatidylcholine (LPC) and lysophosphatidylethanolamine (LPE), but not on lysophosphatidylserine (LPS), and lysophosphatidylglycerol (LPG). It may act by transphosphatidylation, releasing exclusively cyclic phosphate products as second products. This Loxosceles boneti (North American fiddleback spider) protein is Dermonecrotic toxin LbSicTox-betaIA1a.